The following is a 554-amino-acid chain: Glucose-6-phosphate isomerase (554 aa).

The Proton donor role is filled by E359. Catalysis depends on residues H390 and K518.

Belongs to the GPI family.

The protein localises to the cytoplasm. The enzyme catalyses alpha-D-glucose 6-phosphate = beta-D-fructose 6-phosphate. The protein operates within carbohydrate biosynthesis; gluconeogenesis. It participates in carbohydrate degradation; glycolysis; D-glyceraldehyde 3-phosphate and glycerone phosphate from D-glucose: step 2/4. Catalyzes the reversible isomerization of glucose-6-phosphate to fructose-6-phosphate. The protein is Glucose-6-phosphate isomerase of Pseudomonas syringae pv. tomato (strain ATCC BAA-871 / DC3000).